Reading from the N-terminus, the 325-residue chain is MATH domain and coiled-coil domain-containing protein At3g58430 (325 aa).

Residues 6 to 131 (HKKFCWIIKN…KGDFKIIAEV (126 aa)) enclose the MATH domain. Residues 258 to 306 (FKVDWLEKKLDQVKDKKEREQSGLARLHELEEYLLKLKQKCSNLDLLVE) are a coiled coil.

The sequence is that of MATH domain and coiled-coil domain-containing protein At3g58430 from Arabidopsis thaliana (Mouse-ear cress).